Reading from the N-terminus, the 458-residue chain is MRPLSPPPAGWFCVLAGVLACVLGPVGSWAVGLQQEECDYLQMIKVQHKQCLEEAQLENETSGCSKMWDNLTCWPATPRGQVVVLACPLIFKLFSPTQGLNVSRNCTDEGWTPLEPGPYPIACGMDDKASGLDEQQTVFYNSVKTGYTIGYSLSLAALLVATAILSLFRKLHCTRNYIHMHLFISFILRATAVFIKDLALFDSEESDHCSKGSVGCKAAVVLFQYCVMANFFWLLVEGLYLHTLLAVSFFSERKYFWGYIFVGWGVPSTFIMVWTVVRIHFEDYGCWDTIHSSLWWIIKAPILASILVNFILFIRIIGILVQKLRPPDVGKSDNSPYSRLAKSTLLLIPLFGVHYIMFAFFPDNFKAEVKMVFELIVGSFQGCVVAILYCFLNGEVQAELRRKWRRWHQQGVLGWDSKYQHPSGGSNGDTCSTQVSMLTRVSPSARRSSSFQAEVSLV.

A signal peptide spans 1–31 (MRPLSPPPAGWFCVLAGVLACVLGPVGSWAV). The Extracellular portion of the chain corresponds to 32-142 (GLQQEECDYL…DEQQTVFYNS (111 aa)). 5 disulfide bridges follow: Cys38-Cys209, Cys51-Cys73, Cys64-Cys106, Cys87-Cys123, and Cys216-Cys286. Asn59, Asn70, Asn101, and Asn105 each carry an N-linked (GlcNAc...) asparagine glycan. A helical transmembrane segment spans residues 143 to 167 (VKTGYTIGYSLSLAALLVATAILSL). Residues 168-175 (FRKLHCTR) lie on the Cytoplasmic side of the membrane. A helical transmembrane segment spans residues 176-197 (NYIHMHLFISFILRATAVFIKD). At 198–217 (LALFDSEESDHCSKGSVGCK) the chain is on the extracellular side. The helical transmembrane segment at 218–242 (AAVVLFQYCVMANFFWLLVEGLYLH) threads the bilayer. Residues 243–255 (TLLAVSFFSERKY) lie on the Cytoplasmic side of the membrane. The chain crosses the membrane as a helical span at residues 256–277 (FWGYIFVGWGVPSTFIMVWTVV). At 278 to 292 (RIHFEDYGCWDTIHS) the chain is on the extracellular side. Residues 293–317 (SLWWIIKAPILASILVNFILFIRII) form a helical membrane-spanning segment. At 318–339 (GILVQKLRPPDVGKSDNSPYSR) the chain is on the cytoplasmic side. A helical membrane pass occupies residues 340-360 (LAKSTLLLIPLFGVHYIMFAF). The Extracellular segment spans residues 361–368 (FPDNFKAE). The helical transmembrane segment at 369 to 392 (VKMVFELIVGSFQGCVVAILYCFL) threads the bilayer. At 393-458 (NGEVQAELRR…SSFQAEVSLV (66 aa)) the chain is on the cytoplasmic side.

The protein belongs to the G-protein coupled receptor 2 family. Interacts with ADCYAP1/PACAP; activated by both PACAP27 and PACAP38 neuropeptides. Interacts with VIP; the interaction results in VIPR1 activation.

It localises to the cell membrane. Functionally, g protein-coupled receptor activated by the neuropeptides vasoactive intestinal peptide (VIP) and pituitary adenylate cyclase-activating polypeptide (ADCYAP1/PACAP). Binds VIP and both PACAP27 and PACAP38 bioactive peptides with the following order of ligand affinity VIP = PACAP27 &gt; PACAP38. Ligand binding causes a conformation change that triggers signaling via guanine nucleotide-binding proteins (G proteins) and modulates the activity of downstream effectors. Activates cAMP-dependent pathway. This Sus scrofa (Pig) protein is Vasoactive intestinal polypeptide receptor 1 (VIPR1).